The chain runs to 678 residues: Glutamate--cysteine ligase (678 aa).

This sequence belongs to the glutamate--cysteine ligase type 3 family.

The catalysed reaction is L-cysteine + L-glutamate + ATP = gamma-L-glutamyl-L-cysteine + ADP + phosphate + H(+). Its pathway is sulfur metabolism; glutathione biosynthesis; glutathione from L-cysteine and L-glutamate: step 1/2. Feedback inhibition by glutathione. Its function is as follows. Catalyzes the ATP-dependent condensation of cysteine and glutamate to form the dipeptide gamma-glutamylcysteine (gamma-GC), the first and rate-limiting step in the production of glutathione (GSH). In Saccharomyces cerevisiae (strain ATCC 204508 / S288c) (Baker's yeast), this protein is Glutamate--cysteine ligase (GSH1).